Consider the following 85-residue polypeptide: Small ribosomal subunit protein bS18c (85 aa).

Belongs to the bacterial ribosomal protein bS18 family. In terms of assembly, part of the 30S ribosomal subunit.

The protein resides in the plastid. Its subcellular location is the chloroplast. This is Small ribosomal subunit protein bS18c from Tupiella akineta (Green alga).